The chain runs to 163 residues: Nucleotide-binding protein HDEF_1968 (163 aa).

Belongs to the YajQ family.

Functionally, nucleotide-binding protein. This is Nucleotide-binding protein HDEF_1968 from Hamiltonella defensa subsp. Acyrthosiphon pisum (strain 5AT).